The chain runs to 255 residues: High-affinity branched-chain amino acid transport ATP-binding protein LivG (255 aa).

The ABC transporter domain maps to Leu-6–Glu-254. ATP is bound at residue Gly-38 to Thr-45.

The protein belongs to the ABC transporter superfamily.

Component of the high-affinity branched-chain amino acid transport system. In Salmonella typhi, this protein is High-affinity branched-chain amino acid transport ATP-binding protein LivG (livG).